A 368-amino-acid polypeptide reads, in one-letter code: Carbamoyl phosphate synthase small chain (368 aa).

The segment at 1–178 is CPSase; that stretch reads MKAVLGLEDG…GAAGAWKGSG (178 aa). Positions 45, 230, and 232 each coordinate L-glutamine. Positions 182–368 constitute a Glutamine amidotransferase type-1 domain; the sequence is HAVVVDLGIK…KVVKVLGGGL (187 aa). The active-site Nucleophile is the cysteine 257. Residues phenylalanine 258, glutamine 261, asparagine 299, glycine 301, and tyrosine 302 each coordinate L-glutamine. Catalysis depends on residues histidine 342 and glutamate 344.

This sequence belongs to the CarA family. In terms of assembly, composed of two chains; the small (or glutamine) chain promotes the hydrolysis of glutamine to ammonia, which is used by the large (or ammonia) chain to synthesize carbamoyl phosphate. Tetramer of heterodimers (alpha,beta)4.

It catalyses the reaction hydrogencarbonate + L-glutamine + 2 ATP + H2O = carbamoyl phosphate + L-glutamate + 2 ADP + phosphate + 2 H(+). The catalysed reaction is L-glutamine + H2O = L-glutamate + NH4(+). It functions in the pathway amino-acid biosynthesis; L-arginine biosynthesis; carbamoyl phosphate from bicarbonate: step 1/1. Its pathway is pyrimidine metabolism; UMP biosynthesis via de novo pathway; (S)-dihydroorotate from bicarbonate: step 1/3. Small subunit of the glutamine-dependent carbamoyl phosphate synthetase (CPSase). CPSase catalyzes the formation of carbamoyl phosphate from the ammonia moiety of glutamine, carbonate, and phosphate donated by ATP, constituting the first step of 2 biosynthetic pathways, one leading to arginine and/or urea and the other to pyrimidine nucleotides. The small subunit (glutamine amidotransferase) binds and cleaves glutamine to supply the large subunit with the substrate ammonia. In Methanosarcina mazei (strain ATCC BAA-159 / DSM 3647 / Goe1 / Go1 / JCM 11833 / OCM 88) (Methanosarcina frisia), this protein is Carbamoyl phosphate synthase small chain.